The sequence spans 409 residues: Dual-specificity RNA methyltransferase RlmN (409 aa).

The Proton acceptor role is filled by Glu-126. One can recognise a Radical SAM core domain in the interval 132-373 (EEGRGTLCLS…NQAGYASPIR (242 aa)). A disulfide bridge connects residues Cys-139 and Cys-384. Residues Cys-146, Cys-150, and Cys-153 each coordinate [4Fe-4S] cluster. Residues 210-211 (GE), Ser-242, 264-266 (SLH), and Asn-341 contribute to the S-adenosyl-L-methionine site. Residue Cys-384 is the S-methylcysteine intermediate of the active site.

Belongs to the radical SAM superfamily. RlmN family. It depends on [4Fe-4S] cluster as a cofactor.

The protein resides in the cytoplasm. It carries out the reaction adenosine(2503) in 23S rRNA + 2 reduced [2Fe-2S]-[ferredoxin] + 2 S-adenosyl-L-methionine = 2-methyladenosine(2503) in 23S rRNA + 5'-deoxyadenosine + L-methionine + 2 oxidized [2Fe-2S]-[ferredoxin] + S-adenosyl-L-homocysteine. The enzyme catalyses adenosine(37) in tRNA + 2 reduced [2Fe-2S]-[ferredoxin] + 2 S-adenosyl-L-methionine = 2-methyladenosine(37) in tRNA + 5'-deoxyadenosine + L-methionine + 2 oxidized [2Fe-2S]-[ferredoxin] + S-adenosyl-L-homocysteine. Specifically methylates position 2 of adenine 2503 in 23S rRNA and position 2 of adenine 37 in tRNAs. m2A2503 modification seems to play a crucial role in the proofreading step occurring at the peptidyl transferase center and thus would serve to optimize ribosomal fidelity. This is Dual-specificity RNA methyltransferase RlmN from Bartonella quintana (strain Toulouse) (Rochalimaea quintana).